A 197-amino-acid chain; its full sequence is ATP-dependent Clp protease proteolytic subunit (197 aa).

S98 acts as the Nucleophile in catalysis. H123 is a catalytic residue.

Belongs to the peptidase S14 family. Fourteen ClpP subunits assemble into 2 heptameric rings which stack back to back to give a disk-like structure with a central cavity, resembling the structure of eukaryotic proteasomes.

It localises to the cytoplasm. It carries out the reaction Hydrolysis of proteins to small peptides in the presence of ATP and magnesium. alpha-casein is the usual test substrate. In the absence of ATP, only oligopeptides shorter than five residues are hydrolyzed (such as succinyl-Leu-Tyr-|-NHMec, and Leu-Tyr-Leu-|-Tyr-Trp, in which cleavage of the -Tyr-|-Leu- and -Tyr-|-Trp bonds also occurs).. In terms of biological role, cleaves peptides in various proteins in a process that requires ATP hydrolysis. Has a chymotrypsin-like activity. Plays a major role in the degradation of misfolded proteins. The polypeptide is ATP-dependent Clp protease proteolytic subunit (Lysinibacillus sphaericus (strain C3-41)).